Reading from the N-terminus, the 729-residue chain is MLYKGDTLYLDWLEDGIAELVFDAPGSVNKLDTATVASLGEAIGVLEQQSDLKGLLLRSNKAAFIVGADITEFLSLFLVPEEQLSQWLHFANSVFNRLEDLPVPTIAAVNGYALGGGCECVLATDYRLATPDLRIGLPETKLGIMPGFGGSVRMPRMLGADSALEIIAAGKDVGADQALKIGLVDGVVKAEKLVEGAMAILRQAINGDLDWKAKRQPKLEPLKLSKIEAAMSFTIAKGMVAQTAGKHYPAPITAVKTIEAAARFGREEALNLENKSFVPLAHTNEARALVGIFLNDQYVKGKAKKLTKDVETPKQAAVLGAGIMGGGIAYQSAWKGVPVVMKDINDKSLTLGMTEAAKLLNKQLERGKIDGLKLAGVISTIHPTLDYAGFDRVDVVVEAVVENPKVKKAVLAETEQKVRPDTVLASNTSTIPISELANALERPENFCGMHFFNPVHRMPLVEIIRGEKSSDETIAKVVAWASKMGKTPIVVNDCPGFFVNRVLFPYFAGFSQLLRDGADFRKIDKVMEKQFGWPMGPAYLLDVVGIDTAHHAQAVMAAGFPQRMQKDYRDAIDALFNANRFGQKNGLGFWRYKEDSKGKPKKEEDVVVDDLLAKVSQPKRDFSEEEIIARMMIPMVNEVVRCLEEGIIATPAEADMALVYGLGFPPFHGGAFRWLDTLGSAKYLDMAQQYQHLGPLYEVPEGLRNKARHNEPYYPPVEPARPVGDLKTA.

The enoyl-CoA hydratase/isomerase stretch occupies residues 1-189 (MLYKGDTLYL…KIGLVDGVVK (189 aa)). Residue aspartate 296 coordinates substrate. The segment at 311 to 729 (ETPKQAAVLG…ARPVGDLKTA (419 aa)) is 3-hydroxyacyl-CoA dehydrogenase. NAD(+) contacts are provided by residues methionine 324, aspartate 343, 400–402 (VVE), lysine 407, and serine 429. Catalysis depends on histidine 450, which acts as the For 3-hydroxyacyl-CoA dehydrogenase activity. Asparagine 453 is an NAD(+) binding site. The substrate site is built by asparagine 500 and tyrosine 660. The segment at 708-729 (RHNEPYYPPVEPARPVGDLKTA) is disordered.

It in the N-terminal section; belongs to the enoyl-CoA hydratase/isomerase family. The protein in the C-terminal section; belongs to the 3-hydroxyacyl-CoA dehydrogenase family. Heterotetramer of two alpha chains (FadB) and two beta chains (FadA).

The catalysed reaction is a (3S)-3-hydroxyacyl-CoA + NAD(+) = a 3-oxoacyl-CoA + NADH + H(+). The enzyme catalyses a (3S)-3-hydroxyacyl-CoA = a (2E)-enoyl-CoA + H2O. It catalyses the reaction a 4-saturated-(3S)-3-hydroxyacyl-CoA = a (3E)-enoyl-CoA + H2O. It carries out the reaction (3S)-3-hydroxybutanoyl-CoA = (3R)-3-hydroxybutanoyl-CoA. The catalysed reaction is a (3Z)-enoyl-CoA = a 4-saturated (2E)-enoyl-CoA. The enzyme catalyses a (3E)-enoyl-CoA = a 4-saturated (2E)-enoyl-CoA. It participates in lipid metabolism; fatty acid beta-oxidation. Its function is as follows. Involved in the aerobic and anaerobic degradation of long-chain fatty acids via beta-oxidation cycle. Catalyzes the formation of 3-oxoacyl-CoA from enoyl-CoA via L-3-hydroxyacyl-CoA. It can also use D-3-hydroxyacyl-CoA and cis-3-enoyl-CoA as substrate. This is Fatty acid oxidation complex subunit alpha from Escherichia coli O6:H1 (strain CFT073 / ATCC 700928 / UPEC).